Consider the following 814-residue polypeptide: Origin of replication complex subunit 1 (814 aa).

Residues 1-15 are compositionally biased toward polar residues; it reads MDLSATPSRSKSGLR. The interval 1–127 is disordered; the sequence is MDLSATPSRS…PKKPKKRAYY (127 aa). Low complexity-rich tracts occupy residues 51–62 and 69–80; these read APMSPVTPSSVR and ETPTKVTSETPV. The Nuclear localization signal motif lies at 105-112; sequence PKRQRQRQ. Positions 108–127 are enriched in basic residues; that stretch reads QRQRQRQRQQPKKPKKRAYY. Residues 157 to 181 form a histone H3 binding region; the sequence is DPEAEECRVCFRAGAAVMVECDVCL. The segment at 160–209 adopts a PHD-type zinc-finger fold; sequence AEECRVCFRAGAAVMVECDVCLGGFHLRCVRPPLRRVPEGDWACPYCEAE. Zn(2+) contacts are provided by Cys163, Cys166, Cys177, Cys180, His185, and Cys188. Residues 197 to 201 are histone H3 binding; the sequence is PEGDW. Positions 203 and 206 each coordinate Zn(2+). Residues 218–335 enclose the BAH domain; it reads PKPPEGKRIV…IHWHNFKRLA (118 aa). A histone H3 binding region spans residues 310-315; the sequence is ASDQGD. 2 stretches are compositionally biased toward acidic residues: residues 339 to 349 and 360 to 373; these read DEPETKEDPGD and SDSDEDSEYDEEEE. Residues 339 to 384 form a disordered region; it reads DEPETKEDPGDEPYNAGNDYVSDSDEDSEYDEEEEPTKCSSARTHQ. Residues 433–804 form a necessary and sufficient for ORC complex assembly region; sequence PKSLPCRDKE…DDVTFALKES (372 aa). Residues 468–475 and 468–476 contribute to the ATP site; these read GVPGTGKT and GVPGTGKTM. Residues Asp558 and Glu559 each coordinate Mg(2+). Positions 559, 592, and 657 each coordinate ATP.

It belongs to the ORC1 family. In terms of assembly, component of the origin recognition complex (ORC) composed of at least ORC1, ORC2, ORC3, ORC4, ORC5 and ORC6. ORC is regulated in a cell-cycle and development dependent manner. It is sequentially assembled at the exit from anaphase of mitosis and disassembled as cells enter S phase. Binds unmodified and methylated histone H3. Expressed strongly in root tips and shoot apical meristem (SAM), and weakly in young leaves. Not detected in mature leaves.

Its subcellular location is the nucleus. Its function is as follows. Essential protein. Component of the origin recognition complex (ORC) that binds origins of replication. It has a role in both chromosomal replication and mating type transcriptional silencing. Binds to the ARS consensus sequence (ACS) of origins of replication. H3K4me3 effector that positively regulates the transcription of a subset of genes. Required for cell proliferation. The sequence is that of Origin of replication complex subunit 1 from Oryza sativa subsp. japonica (Rice).